The chain runs to 195 residues: MPKGNKKPNEKKEELEKFAKELQGSDSDEDAVVIEQPTVEPKLPQNDSSSSNKIVLSQAEKDLLRTELDKTEEEISTLKQVLSARQKHAAELKRKLGLTPFSELSQDINRSLKTVTDTDAYQKTAEVAAATSDTVKEKWNDMRNSSLFKSFESKLGSALNNAKMAASTSIDHLAGAARGPSQTGTPVAEEAKPIS.

Disordered regions lie at residues Met-1–Ile-54 and Leu-173–Ser-195. Over residues Lys-7–Lys-20 the composition is skewed to basic and acidic residues. The span at Gln-45–Ile-54 shows a compositional bias: polar residues. Positions Ser-48–Gly-97 form a coiled coil.

It belongs to the TPD52 family.

This is an uncharacterized protein from Caenorhabditis elegans.